The sequence spans 153 residues: Ribonuclease H (153 aa).

Residues 4–146 form the RNase H type-1 domain; sequence NNEIVEIYTD…CDRLATEQIK (143 aa). 4 residues coordinate Mg(2+): Asp13, Glu51, Asp73, and Asp138.

Belongs to the RNase H family. Monomer. It depends on Mg(2+) as a cofactor.

It localises to the cytoplasm. The catalysed reaction is Endonucleolytic cleavage to 5'-phosphomonoester.. Functionally, endonuclease that specifically degrades the RNA of RNA-DNA hybrids. The sequence is that of Ribonuclease H from Caldanaerobacter subterraneus subsp. tengcongensis (strain DSM 15242 / JCM 11007 / NBRC 100824 / MB4) (Thermoanaerobacter tengcongensis).